The chain runs to 294 residues: Protoheme IX farnesyltransferase (294 aa).

9 consecutive transmembrane segments (helical) span residues 24-44 (VVLL…PGWV), 48-68 (LIAF…AINH), 96-116 (ALWF…LFVN), 118-138 (LTAL…TGYL), 145-165 (NIVI…TAVT), 172-192 (ALLL…ALAI), 224-244 (VLLL…WIYL), 245-265 (LGAL…YFTD), and 268-288 (VVAM…FVFL).

Belongs to the UbiA prenyltransferase family. Protoheme IX farnesyltransferase subfamily.

The protein localises to the cell inner membrane. It catalyses the reaction heme b + (2E,6E)-farnesyl diphosphate + H2O = Fe(II)-heme o + diphosphate. It functions in the pathway porphyrin-containing compound metabolism; heme O biosynthesis; heme O from protoheme: step 1/1. Functionally, converts heme B (protoheme IX) to heme O by substitution of the vinyl group on carbon 2 of heme B porphyrin ring with a hydroxyethyl farnesyl side group. The polypeptide is Protoheme IX farnesyltransferase (Legionella pneumophila (strain Corby)).